The sequence spans 212 residues: COP9 signalosome complex subunit 8 (212 aa).

One can recognise a PCI domain in the interval 26-193 (TSLSAYEEQA…KPVVTAPPKD (168 aa)).

This sequence belongs to the CSN8 family. As to quaternary structure, component of the COP9 signalosome (CSN) complex.

It localises to the cytoplasm. It is found in the nucleus. Its function is as follows. Component of the COP9 signalosome (CSN) complex that acts as an regulator of the ubiquitin (Ubl) conjugation pathway by mediating the deneddylation of the cullin subunit of SCF-type E3 ubiquitin-protein ligase complexes. The CSN complex seems to link protein degradation to sexual development. This Emericella nidulans (strain FGSC A4 / ATCC 38163 / CBS 112.46 / NRRL 194 / M139) (Aspergillus nidulans) protein is COP9 signalosome complex subunit 8 (csnH).